We begin with the raw amino-acid sequence, 407 residues long: MTYPDDYSTDVQKNEMDLKEFKEKAYLAELESKVLRLELKNKDITRENVQIKKENEILKRELDKLRIPPLILGTVLDRVNERKAVVKSSTGPNFLVNLSQFVEPDDIVPGARVCLNQQTLAVVEVLPKEKDYRAMAMELEEKPDILFGDIGGLNNQIRDIKEVVELPLKNPELFEKVGIVPPKGVLLYGPPGTGKTLLAKAVARETNASFVRVVGSELVKKFIGEGAKLVRDVFKLAKEKSPCIIFIDEIDAVASKRTESLTGGDREVQRTLMQLLAEMDGFDSRGDVKIIAATNRPDILDPAILRPGRFDRIIEIAAPDEDGRLEIFKIHTDKMNIKSVDLREIAKMAENMVGADIKAVCTEAGMFAIREGREYVTTKDFKEALLKVTGKKEKSEEGIAHLTTMYG.

The stretch at 22 to 67 (KEKAYLAELESKVLRLELKNKDITRENVQIKKENEILKRELDKLRI) forms a coiled coil. ATP contacts are provided by residues 192-197 (GTGKTL) and histidine 331. Positions 405 to 407 (MYG) are docks into pockets in the proteasome alpha-ring to cause gate opening.

The protein belongs to the AAA ATPase family. As to quaternary structure, homohexamer. The hexameric complex has a two-ring architecture resembling a top hat that caps the 20S proteasome core at one or both ends. Upon ATP-binding, the C-terminus of PAN interacts with the alpha-rings of the proteasome core by binding to the intersubunit pockets.

The protein resides in the cytoplasm. In terms of biological role, ATPase which is responsible for recognizing, binding, unfolding and translocation of substrate proteins into the archaeal 20S proteasome core particle. Is essential for opening the gate of the 20S proteasome via an interaction with its C-terminus, thereby allowing substrate entry and access to the site of proteolysis. Thus, the C-termini of the proteasomal ATPase function like a 'key in a lock' to induce gate opening and therefore regulate proteolysis. Unfolding activity requires energy from ATP hydrolysis, whereas ATP binding alone promotes ATPase-20S proteasome association which triggers gate opening, and supports translocation of unfolded substrates. This is Proteasome-activating nucleotidase from Methanococcus vannielii (strain ATCC 35089 / DSM 1224 / JCM 13029 / OCM 148 / SB).